Consider the following 118-residue polypeptide: MARIAGVNIPDNKHAVISLTYIFGIGRTTAKKILDTVGIAPTTKISQLDDAQLDAIRAEVGNYMTEGDLRREVSMNIKRLVDLGCYRGIRHRRNLPVRGQNTKNNARTRKGPIRSIKR.

Residues 94–118 form a disordered region; sequence NLPVRGQNTKNNARTRKGPIRSIKR. A compositionally biased stretch (basic residues) spans 106–118; it reads ARTRKGPIRSIKR.

The protein belongs to the universal ribosomal protein uS13 family. Part of the 30S ribosomal subunit. Forms a loose heterodimer with protein S19. Forms two bridges to the 50S subunit in the 70S ribosome.

Functionally, located at the top of the head of the 30S subunit, it contacts several helices of the 16S rRNA. In the 70S ribosome it contacts the 23S rRNA (bridge B1a) and protein L5 of the 50S subunit (bridge B1b), connecting the 2 subunits; these bridges are implicated in subunit movement. Contacts the tRNAs in the A and P-sites. This chain is Small ribosomal subunit protein uS13, found in Psychrobacter sp. (strain PRwf-1).